A 70-amino-acid polypeptide reads, in one-letter code: Putative membrane protein insertion efficiency factor (70 aa).

This sequence belongs to the UPF0161 family.

It is found in the cell inner membrane. Its function is as follows. Could be involved in insertion of integral membrane proteins into the membrane. In Sphingopyxis alaskensis (strain DSM 13593 / LMG 18877 / RB2256) (Sphingomonas alaskensis), this protein is Putative membrane protein insertion efficiency factor.